The following is an 801-amino-acid chain: Transducin beta-like protein 3 (801 aa).

An N-acetylalanine modification is found at A2. WD repeat units lie at residues 64 to 105 (EDQE…RLWK), 107 to 146 (IHTAPVASMAFDATSTLLATGGCDGAVRVWDIVQHYGTHH), 149 to 190 (GSPG…CLAV), 193 to 232 (AHYSAVTSLSFSEGGHTMLSSGRDKICIVWDLQSYQTTRT), 245 to 284 (LPEQPAPALGVKSSGLHFLTAGDQGILRVWEAASGQCVYT), 290 to 329 (GLRQELTHCTLARAADLLLTVTADHNLLLYEAHSLQLQKQ), 332 to 372 (GYSE…CQIL), 374 to 413 (GHTDIVLALDVFRKGWLFASCAKDQSIRIWKMNKAGQVAC), 419 to 459 (GHTH…LAKS), 477 to 516 (CHDKDINSLAVSPNDKLLATGSQDRTAKLWALPQCQLLGV), 519 to 560 (GHRR…KTFE), 562 to 602 (HDAS…RTLD), and 604 to 642 (HEDKVWGLHCSQLDDHAITGGSDSRIILWKDVTEAEQAE). S257 is modified (phosphoserine). A Glycyl lysine isopeptide (Lys-Gly) (interchain with G-Cter in SUMO2) cross-link involves residue K407.

In terms of assembly, part of the small subunit (SSU) processome, composed of more than 70 proteins and the RNA chaperone small nucleolar RNA (snoRNA) U3.

The protein resides in the nucleus. Its subcellular location is the nucleolus. Its function is as follows. Part of the small subunit (SSU) processome, first precursor of the small eukaryotic ribosomal subunit. During the assembly of the SSU processome in the nucleolus, many ribosome biogenesis factors, an RNA chaperone and ribosomal proteins associate with the nascent pre-rRNA and work in concert to generate RNA folding, modifications, rearrangements and cleavage as well as targeted degradation of pre-ribosomal RNA by the RNA exosome. The polypeptide is Transducin beta-like protein 3 (Tbl3) (Mus musculus (Mouse)).